We begin with the raw amino-acid sequence, 440 residues long: MRLSRYFLPILREVPKEADIVSHRLMLRAGMIRQESAGIYAWLPLGLRVLNKICNIIREEQNRTGAVELLMPTIQSADLWRESGRYDDYGKEMLRIKDRHERDMLFGPTNEEMITEIVRGSIKSYKSLPLNLYHIQWKFRDEVRPRFGVYRSREFLMKDAYSFDLDAEGAKHSYNKMFVAYLRTFARMGLKAIPMVADTGPIGGNLSHEFIILASTGESEVFCHGDYLEMAPPPADVNFDDAAAIQQVVNDWTTLYAATEEKHDAATFAAIPAERQMAARGIEVGHIFYFGTKYSAPFNAKVLGPDGAEHLIHMGSYGIGPSRLVAAMIEASHDDAGIIWPDAVAPFQVGILNLKVGDSAVDAACADLYAKLTAAGVDVLYDDTDERAGSKFATADLIGLPWQILVGPKSLADGKVELKRRVDGSRELVTPAEAFERLKG.

It belongs to the class-II aminoacyl-tRNA synthetase family. ProS type 2 subfamily. Homodimer.

It is found in the cytoplasm. The enzyme catalyses tRNA(Pro) + L-proline + ATP = L-prolyl-tRNA(Pro) + AMP + diphosphate. Functionally, catalyzes the attachment of proline to tRNA(Pro) in a two-step reaction: proline is first activated by ATP to form Pro-AMP and then transferred to the acceptor end of tRNA(Pro). This Azorhizobium caulinodans (strain ATCC 43989 / DSM 5975 / JCM 20966 / LMG 6465 / NBRC 14845 / NCIMB 13405 / ORS 571) protein is Proline--tRNA ligase.